The primary structure comprises 560 residues: Putative transport protein VSAL_I2029 (560 aa).

The next 5 helical transmembrane spans lie at 14–34 (ILLL…KIGS), 37–57 (LGSS…GYTF), 66–86 (FMLF…GIFL), 94–114 (LLVL…GYYF), and 161–181 (NLSV…ILLA). 2 consecutive RCK C-terminal domains span residues 203–292 (RGIG…FRNG) and 293–376 (KEVF…KIGF). 5 helical membrane-spanning segments follow: residues 386–406 (LLAF…TMSF), 409–429 (VTFG…LGFL), 451–471 (GLLV…IEYF), 478–498 (VLAA…LVGA), and 539–559 (AGTY…MILL).

Belongs to the AAE transporter (TC 2.A.81) family. YbjL subfamily.

It is found in the cell membrane. The polypeptide is Putative transport protein VSAL_I2029 (Aliivibrio salmonicida (strain LFI1238) (Vibrio salmonicida (strain LFI1238))).